The sequence spans 366 residues: Alanine racemase (366 aa).

Lys-33 serves as the catalytic Proton acceptor; specific for D-alanine. Lys-33 is modified (N6-(pyridoxal phosphate)lysine). Residue Arg-129 coordinates substrate. The active-site Proton acceptor; specific for L-alanine is Tyr-253. Met-301 provides a ligand contact to substrate.

It belongs to the alanine racemase family. The cofactor is pyridoxal 5'-phosphate.

The catalysed reaction is L-alanine = D-alanine. It participates in amino-acid biosynthesis; D-alanine biosynthesis; D-alanine from L-alanine: step 1/1. Catalyzes the interconversion of L-alanine and D-alanine. May also act on other amino acids. The sequence is that of Alanine racemase (alr) from Xanthomonas oryzae pv. oryzae (strain MAFF 311018).